A 605-amino-acid chain; its full sequence is Translation factor GUF1 homolog, chloroplastic (605 aa).

The tr-type G domain maps to 7–189 (RRIRNFSIIA…RIVQVVPPPR (183 aa)). GTP-binding positions include 16-23 (AHIDHGKS), 82-86 (DTPGH), and 136-139 (NKID).

It belongs to the TRAFAC class translation factor GTPase superfamily. Classic translation factor GTPase family. LepA subfamily.

It is found in the plastid. The protein resides in the chloroplast. It carries out the reaction GTP + H2O = GDP + phosphate + H(+). In terms of biological role, promotes chloroplast protein synthesis. May act as a fidelity factor of the translation reaction, by catalyzing a one-codon backward translocation of tRNAs on improperly translocated ribosomes. In Ostreococcus lucimarinus (strain CCE9901), this protein is Translation factor GUF1 homolog, chloroplastic.